Reading from the N-terminus, the 258-residue chain is Thiazole synthase (258 aa).

Residue lysine 96 is the Schiff-base intermediate with DXP of the active site. 1-deoxy-D-xylulose 5-phosphate contacts are provided by residues glycine 157, 183 to 184, and 205 to 206; these read AG and NT.

Belongs to the ThiG family. As to quaternary structure, homotetramer. Forms heterodimers with either ThiH or ThiS.

It localises to the cytoplasm. The catalysed reaction is [ThiS sulfur-carrier protein]-C-terminal-Gly-aminoethanethioate + 2-iminoacetate + 1-deoxy-D-xylulose 5-phosphate = [ThiS sulfur-carrier protein]-C-terminal Gly-Gly + 2-[(2R,5Z)-2-carboxy-4-methylthiazol-5(2H)-ylidene]ethyl phosphate + 2 H2O + H(+). Its pathway is cofactor biosynthesis; thiamine diphosphate biosynthesis. Catalyzes the rearrangement of 1-deoxy-D-xylulose 5-phosphate (DXP) to produce the thiazole phosphate moiety of thiamine. Sulfur is provided by the thiocarboxylate moiety of the carrier protein ThiS. In vitro, sulfur can be provided by H(2)S. This chain is Thiazole synthase, found in Alkaliphilus metalliredigens (strain QYMF).